The following is a 712-amino-acid chain: Solute carrier organic anion transporter family member 1C1 (712 aa).

Topologically, residues 1–43 (MDTSSKENIQLFCKTSVQPVGRPSFKTEYPSSEEKQPCCGELK) are cytoplasmic. A helical transmembrane segment spans residues 44–63 (VFLCALSFVYFAKALAEGYL). The Extracellular segment spans residues 64 to 82 (KSTITQIERRFDIPSSLVG). A helical transmembrane segment spans residues 83–103 (VIDGSFEIGNLLVITFVSYFG). Residues 104-109 (AKLHRP) are Cytoplasmic-facing. The chain crosses the membrane as a helical span at residues 110–134 (KIIGAGCVIMGVGTLLIAMPQFFME). The Extracellular segment spans residues 135–184 (QYKYERYSPSSNSTLSISPCLLESSSQLPVSVMEKSKSKISNECEVDTSS). N146 carries an N-linked (GlcNAc...) asparagine glycan. Residues 185–213 (SMWIYVFLGNLLRGIGETPIQPLGIAYLD) traverse the membrane as a helical segment. The Cytoplasmic portion of the chain corresponds to 214–232 (DFASEDNAAFYIGCVQTVA). A helical membrane pass occupies residues 233-253 (IIGPIFGFLLGSLCAKLYVDI). Residues 254-271 (GFVNLDHITITPKDPQWV) are Extracellular-facing. The helical transmembrane segment at 272–296 (GAWWLGYLIAGIISLLAAVPFWYLP) threads the bilayer. The Cytoplasmic portion of the chain corresponds to 297–348 (KSLPRSQSREDSNSSSEKSKFIIDDHTDYQTPQGENAKIMEMARDFLPSLKN). A helical membrane pass occupies residues 349–370 (LFGNPVYFLYLCTSTVQFNSLF). The Extracellular portion of the chain corresponds to 371 to 390 (GMVTYKPKYIEQQYGQSSSR). The helical transmembrane segment at 391-414 (ANFVIGLINIPAVALGIFSGGIVM) threads the bilayer. At 415 to 418 (KKFR) the chain is on the cytoplasmic side. Residues 419–442 (ISVCGAAKLYLGSSVFGYLLFLSL) form a helical membrane-spanning segment. The Extracellular portion of the chain corresponds to 443–554 (FALGCENSDV…NGCPQMFLYF (112 aa)). A Kazal-like domain is found at 470–525 (RALFSDCNSRCKCSETKWEPMCGENGITYVSACLAGCQTSNRSGKNIIFYNCTCVG). Intrachain disulfides connect C476–C506, C482–C502, and C491–C523. Residues N510, N520, and N533 are each glycosylated (N-linked (GlcNAc...) asparagine). The helical transmembrane segment at 555–577 (LVISVITSYTLSLGGIPGYILLL) threads the bilayer. Residues 578–586 (RCIKPQLKS) are Cytoplasmic-facing. A helical membrane pass occupies residues 587–612 (FALGIYTLAIRVLAGIPAPVYFGVLI). Topologically, residues 613–646 (DTSCLKWGFKRCGSRGSCRLYDSNVFRHIYLGLT) are extracellular. The chain crosses the membrane as a helical span at residues 647–664 (VILGTVSILLSIAVLFIL). Residues 665–712 (KKNYVSKHRSFITKRERTMVSTRFQKENYTTSDHLLQPNYWPGKETQL) lie on the Cytoplasmic side of the membrane.

Belongs to the organo anion transporter (TC 2.A.60) family. Highly expressed in brain and in Leydig cells in testis. Localized in nests of Leydig cells (at protein level). Expressed in choroid plexus (at protein level). Not strongly enriched in cerebral microvessels.

The protein localises to the cell membrane. The enzyme catalyses 3,3',5'-triiodo-L-thyronine(out) = 3,3',5'-triiodo-L-thyronine(in). It carries out the reaction L-thyroxine(out) = L-thyroxine(in). It catalyses the reaction L-thyroxine sulfate(out) = L-thyroxine sulfate(in). Mediates the Na(+)-independent high affinity transport of organic anions such as the thyroid hormones L-thyroxine (T4), L-thyroxine sulfate (T4S), and 3,3',5'-triiodo-L-thyronine (reverse T3, rT3) at the plasma membrane. Regulates T4 levels in different brain regions by transporting T4, and also by serving as an export pump for T4S, which is a source of T4 after hydrolysis by local sulfatases. Increases the access of these substrates to the intracellular sites where they are metabolized by the deiodinases. Other potential substrates, such as triiodothyronine (T3), 17-beta-glucuronosyl estradiol (17beta-estradiol 17-O-(beta-D-glucuronate)), estrone-3-sulfate (E1S) and sulfobromophthalein (BSP) are transported with much lower efficiency. Transports T4 and E1S in a pH-insensitive manner. Facilitates the transport of thyroid hormones across the blood-brain barrier and into glia and neuronal cells in the brain. The protein is Solute carrier organic anion transporter family member 1C1 (SLCO1C1) of Homo sapiens (Human).